The sequence spans 130 residues: Small ribosomal subunit protein uS8 (130 aa).

This sequence belongs to the universal ribosomal protein uS8 family. Part of the 30S ribosomal subunit. Contacts proteins S5 and S12.

In terms of biological role, one of the primary rRNA binding proteins, it binds directly to 16S rRNA central domain where it helps coordinate assembly of the platform of the 30S subunit. The protein is Small ribosomal subunit protein uS8 of Marinobacter nauticus (strain ATCC 700491 / DSM 11845 / VT8) (Marinobacter aquaeolei).